The sequence spans 159 residues: SsrA-binding protein (159 aa).

This sequence belongs to the SmpB family.

It localises to the cytoplasm. Its function is as follows. Required for rescue of stalled ribosomes mediated by trans-translation. Binds to transfer-messenger RNA (tmRNA), required for stable association of tmRNA with ribosomes. tmRNA and SmpB together mimic tRNA shape, replacing the anticodon stem-loop with SmpB. tmRNA is encoded by the ssrA gene; the 2 termini fold to resemble tRNA(Ala) and it encodes a 'tag peptide', a short internal open reading frame. During trans-translation Ala-aminoacylated tmRNA acts like a tRNA, entering the A-site of stalled ribosomes, displacing the stalled mRNA. The ribosome then switches to translate the ORF on the tmRNA; the nascent peptide is terminated with the 'tag peptide' encoded by the tmRNA and targeted for degradation. The ribosome is freed to recommence translation, which seems to be the essential function of trans-translation. The chain is SsrA-binding protein from Idiomarina loihiensis (strain ATCC BAA-735 / DSM 15497 / L2-TR).